We begin with the raw amino-acid sequence, 296 residues long: MAITAAMVKDLRETTGAGMMDAKKALTETNGDMEAAIDWLRTKGLAKAAKKSGRVAAEGLVGVAVRAGRGVAVELNSETDFVAKNADFQQLVRDITNVALDAATDVEVLKATHLNGRPVDDVLTDAIARIGENMTLRRLHALEGDTIVSYVHNAAAEGMGKIGVLVALKGDAAKAQEIGKQIAMHIAATNPASLSEADLDPALVEREKSVLSEQARESGKPEAVIEKMIEGRMKKFFEEVTLLGQKFVINPDVTVAQAAQEAGVEVTGYARVVVGEGIEKKEEDFAAEVAKTRAGA.

Residues 79–82 (TDFV) are involved in Mg(2+) ion dislocation from EF-Tu.

It belongs to the EF-Ts family.

Its subcellular location is the cytoplasm. Associates with the EF-Tu.GDP complex and induces the exchange of GDP to GTP. It remains bound to the aminoacyl-tRNA.EF-Tu.GTP complex up to the GTP hydrolysis stage on the ribosome. The sequence is that of Elongation factor Ts from Paracoccus denitrificans (strain Pd 1222).